The chain runs to 95 residues: Histone-like DNA-binding protein (95 aa).

The protein belongs to the bacterial histone-like protein family.

This chain is Histone-like DNA-binding protein, found in Rickettsia montanensis.